A 563-amino-acid chain; its full sequence is Pentatricopeptide repeat-containing protein At4g39620, chloroplastic (563 aa).

Residues 1-47 constitute a chloroplast transit peptide; the sequence is MDYLLTSPSSLRFSDFISSIPKETDHKWLRFSVNLGDARRSTRTRIT. PPR repeat units follow at residues 132 to 166, 167 to 197, 207 to 241, 242 to 276, 277 to 311, 312 to 346, 347 to 381, 382 to 416, and 417 to 451; these read DNGV…GCRP, DASV…YLDK, NVVT…PVSP, DVYT…ECKP, DIIT…KEKP, TLPT…NYIP, SFIT…DRVL, KAST…RVHP, and DAST…GIVP. Disordered regions lie at residues 468–501 and 520–551; these read PGSG…FQDK and NLSG…NNMM. The span at 520–537 shows a compositional bias: basic and acidic residues; it reads NLSGHDKGSRDESRKPSQ.

The protein belongs to the PPR family. P subfamily.

It localises to the plastid. The protein localises to the chloroplast. Its function is as follows. Essential for embryo development. The polypeptide is Pentatricopeptide repeat-containing protein At4g39620, chloroplastic (Arabidopsis thaliana (Mouse-ear cress)).